Consider the following 131-residue polypeptide: Small ribosomal subunit protein uS8 (131 aa).

This sequence belongs to the universal ribosomal protein uS8 family. In terms of assembly, part of the 30S ribosomal subunit. Contacts proteins S5 and S12.

Its function is as follows. One of the primary rRNA binding proteins, it binds directly to 16S rRNA central domain where it helps coordinate assembly of the platform of the 30S subunit. This Burkholderia lata (strain ATCC 17760 / DSM 23089 / LMG 22485 / NCIMB 9086 / R18194 / 383) protein is Small ribosomal subunit protein uS8.